The chain runs to 588 residues: NADP-dependent malic enzyme 2 (588 aa).

The tract at residues methionine 1 to glycine 21 is disordered. The residue at position 2 (glycine 2) is an N-acetylglycine. Catalysis depends on tyrosine 136, which acts as the Proton donor. Residue arginine 189 coordinates NADP(+). Catalysis depends on lysine 207, which acts as the Proton acceptor. The a divalent metal cation site is built by glutamate 279, aspartate 280, and aspartate 303. Residues aspartate 303, leucine 332–alanine 348, and asparagine 444 contribute to the NADP(+) site.

Belongs to the malic enzymes family. As to quaternary structure, homohexamers and homooctamers. Mg(2+) serves as cofactor. Requires Mn(2+) as cofactor. In terms of tissue distribution, expressed in leaves, stems, flowers and roots. Particularly present in vasculatures, trichome basal cells and hydatodes.

The protein resides in the cytoplasm. The enzyme catalyses (S)-malate + NADP(+) = pyruvate + CO2 + NADPH. The catalysed reaction is oxaloacetate + H(+) = pyruvate + CO2. Its activity is regulated as follows. Activated by coenzyme A (CoA), aspartate, succinate and fumarate. Repressed by oxaloacetate, glucose and ATP. The chain is NADP-dependent malic enzyme 2 (NADP-ME2) from Arabidopsis thaliana (Mouse-ear cress).